Here is a 351-residue protein sequence, read N- to C-terminus: Phospho-N-acetylmuramoyl-pentapeptide-transferase (351 aa).

10 consecutive transmembrane segments (helical) span residues 17–37 (TAYA…FIIS), 61–83 (MGIP…FFWI), 88–105 (IYFL…CLGF), 130–150 (ILFS…HVSI), 158–178 (SLKL…LISA), 190–210 (GLAI…AYLT), 230–250 (LVIF…FNAY), 254–274 (IMMG…VALI), 279–299 (ILFA…IIQV), and 328–348 (QVVI…LSTI).

It belongs to the glycosyltransferase 4 family. MraY subfamily. Mg(2+) is required as a cofactor.

Its subcellular location is the cell inner membrane. It catalyses the reaction UDP-N-acetyl-alpha-D-muramoyl-L-alanyl-gamma-D-glutamyl-meso-2,6-diaminopimeloyl-D-alanyl-D-alanine + di-trans,octa-cis-undecaprenyl phosphate = di-trans,octa-cis-undecaprenyl diphospho-N-acetyl-alpha-D-muramoyl-L-alanyl-D-glutamyl-meso-2,6-diaminopimeloyl-D-alanyl-D-alanine + UMP. It functions in the pathway cell wall biogenesis; peptidoglycan biosynthesis. Its function is as follows. Catalyzes the initial step of the lipid cycle reactions in the biosynthesis of the cell wall peptidoglycan: transfers peptidoglycan precursor phospho-MurNAc-pentapeptide from UDP-MurNAc-pentapeptide onto the lipid carrier undecaprenyl phosphate, yielding undecaprenyl-pyrophosphoryl-MurNAc-pentapeptide, known as lipid I. This Borrelia duttonii (strain Ly) protein is Phospho-N-acetylmuramoyl-pentapeptide-transferase.